A 754-amino-acid polypeptide reads, in one-letter code: Disintegrin and metalloproteinase domain-containing protein 7 (754 aa).

The signal sequence occupies residues 1-18; sequence MLPGCIFLMILLIPQVKE. Residues 19 to 176 constitute a propeptide that is removed on maturation; it reads KFILGVEGQQ…NYSCTELNFT (158 aa). The Extracellular segment spans residues 19 to 668; the sequence is KFILGVEGQQ…ACEETLHVTN (650 aa). 4 N-linked (GlcNAc...) asparagine glycosylation sites follow: Asn84, Asn167, Asn174, and Asn184. A Peptidase M12B domain is found at 199–394; that stretch reads KYVELFIVAD…YKPTCMLNIP (196 aa). 4 cysteine pairs are disulfide-bonded: Cys310-Cys389, Cys350-Cys373, Cys352-Cys357, and Cys460-Cys480. A Disintegrin domain is found at 402-488; sequence FQFCGNKKLD…ACPKDQFRVN (87 aa). Residues Asn584 and Asn668 are each glycosylated (N-linked (GlcNAc...) asparagine). The chain crosses the membrane as a helical span at residues 669–689; it reads ITILVVVLVLVIVGIGVLILL. Topologically, residues 690 to 754 are cytoplasmic; sequence VRYRKCIKLK…GIADPNQSAK (65 aa).

In terms of assembly, interacts with ITM2B in sperm; the interaction increases following capacitation. Interacts with HSPA5 and CANX.

The protein resides in the membrane. Functionally, required for normal male fertility via maintenance of epithelial cell morphology in the caput epididymis and subsequently correct epididymis lumen structure required for sperm development. Plays a role in sperm motility, flagella morphology and tyrosine phosphorylation during sperm capacitance. Plays a role in normal expression levels of HSPA5, ITM2B and ADAM2 in sperm both prior to and post-capacitation. This is a non catalytic metalloprotease-like protein. The polypeptide is Disintegrin and metalloproteinase domain-containing protein 7 (Homo sapiens (Human)).